Consider the following 397-residue polypeptide: Elongation factor Tu-1 (397 aa).

In terms of domain architecture, tr-type G spans Lys-10–Glu-206. Residues Gly-19–Thr-26 are G1. Position 19–26 (Gly-19–Thr-26) interacts with GTP. Residue Thr-26 coordinates Mg(2+). Positions Gly-62 to Ser-66 are G2. Positions Asp-83 to Gly-86 are G3. GTP is bound by residues Asp-83–His-87 and Asn-138–Asp-141. A G4 region spans residues Asn-138–Asp-141. Residues Ser-176–Leu-178 form a G5 region.

It belongs to the TRAFAC class translation factor GTPase superfamily. Classic translation factor GTPase family. EF-Tu/EF-1A subfamily. As to quaternary structure, monomer.

Its subcellular location is the cytoplasm. It catalyses the reaction GTP + H2O = GDP + phosphate + H(+). GTP hydrolase that promotes the GTP-dependent binding of aminoacyl-tRNA to the A-site of ribosomes during protein biosynthesis. This chain is Elongation factor Tu-1, found in Streptomyces coelicolor (strain ATCC BAA-471 / A3(2) / M145).